The chain runs to 132 residues: Small ribosomal subunit protein uS8 (132 aa).

It belongs to the universal ribosomal protein uS8 family. As to quaternary structure, part of the 30S ribosomal subunit. Contacts proteins S5 and S12.

Functionally, one of the primary rRNA binding proteins, it binds directly to 16S rRNA central domain where it helps coordinate assembly of the platform of the 30S subunit. The sequence is that of Small ribosomal subunit protein uS8 from Rubrobacter xylanophilus (strain DSM 9941 / JCM 11954 / NBRC 16129 / PRD-1).